The following is a 679-amino-acid chain: MLTHKTCQARKKMQVSFVIRDAEEKQHRNGVNALQLDSNNGKLYSAGRDAIIRVWNTRTEANEKYIQSMEHHNDWVNDIVLCCNGRNLISASCDTTVKVWNAHKGFCMSTLRTHRDYVQALAYAKDREQVASAGLDKAIFLWDVNTLTALTASNNTVTTSSLTGSKDSIYSLAMNPSGTVIVSGSTENILRIWDPRTCMRSMKLRGHTENVRCLVVSPDGNQVVSGSSDGTIKVWNLGQQRCIQTIHVHKEGVWSLLMSENFQYIISGSRDRNIIVTEMRNPSNKMLVCEEKAPVLSLGYNIDKTGVWATTWNSDIRCWKLPMYDRCVLSSGGMDAQWTLGGTELACIKGGAAIKECTVLNDKRYIITKDSQDQVVVYDVLRVTKKEELGVVDYEEEVKKRNKQVYIPNWFTVDLKTGMPTIVLGQEEVDCFAAWVSIEAGLPECDDPTTEIKINYGKLLLEALLEYWTPPHSMPPNEMEPDVRGNGYFQVPKHTPVIFSEVGGRTVCRLLVRDAAGDSESTLLHETAPQWVTDVVIERNIPKFLKIPFFLQPHPQMTKPERTKKDRLVANEFIQCRKVCEHVLEKVLNAETTPSAGNANNSLQNSQSDANSEGSQLPAEERIELWCNDVIVDPNMDLRTVRHFIWKQSTDLTFQYKTKQNFNFDGSIGDSLERVTRKY.

WD repeat units lie at residues 26–65 (QHRN…NEKY), 71–110 (HHND…CMST), 113–152 (THRD…ALTA), 164–203 (GSKD…RSMK), 206–245 (GHTE…CIQT), 248–287 (VHKE…NKML), 290–329 (EEKA…RCVL), and 349–388 (KGGA…KKEE). A disordered region spans residues 594–615 (PSAGNANNSLQNSQSDANSEGS).

This sequence belongs to the WD repeat WDR48 family. In terms of assembly, catalytic component of the Usp12-46 deubiquitylase complex consisting of Usp12-46, Wdr20 and Uaf1; regulatory subunit that, together wtih Wdr20, stabilizes Usp12-46. The Usp12-46 deubiquitylase complex associates with arr/arrow; the interaction leads to deubiquitination and stabilization of arr/arrow.

Its function is as follows. Regulatory component of the Usp12-46 deubiquitylase complex. activates deubiquitination by increasing the catalytic turnover without increasing the affinity of deubiquitinating enzymes for the substrate. The complex deubiquitylates the wg/wingless-signaling receptor arr/arrow, which stabilizes the receptor and increases its concentration at the cell surface; this enhances the sensitivity of cells to wg/wingless-signal stimulation. This increases the amplitude and spatial range of the signaling response to the wg/wingless morphogen gradient, facilitating the precise concentration-dependent regulation of its target genes. Together with Wdr20 and Usp12-46 required for wg/wingless-mediated signaling in the wing imaginal disc and for wg/wingless-dependent regulation of intestinal stem cell proliferation. This is WD repeat-containing protein 48 homolog from Drosophila mojavensis (Fruit fly).